The primary structure comprises 631 residues: Methanol dehydrogenase [cytochrome c] subunit 1 (631 aa).

An N-terminal signal peptide occupies residues 1–32 (MNRNTPKARGASSLAMAVAMGLAVLTTAPATA). C135 and C136 are joined by a disulfide. E209 and N293 together coordinate Ca(2+). The active-site Proton acceptor is D335. The cysteines at positions 418 and 447 are disulfide-linked.

The protein belongs to the bacterial PQQ dehydrogenase family. In terms of assembly, heterotetramer composed of 2 alpha and 2 beta subunits. Pyrroloquinoline quinone serves as cofactor. It depends on Ca(2+) as a cofactor.

It is found in the periplasm. It catalyses the reaction 2 Fe(III)-[cytochrome cL] + a primary alcohol = 2 Fe(II)-[cytochrome cL] + an aldehyde + 2 H(+). Catalyzes the oxidation of primary alcohols including methanol. The polypeptide is Methanol dehydrogenase [cytochrome c] subunit 1 (moxF) (Paracoccus denitrificans).